Consider the following 183-residue polypeptide: Protein Syd (183 aa).

It belongs to the Syd family.

It is found in the cell inner membrane. Functionally, interacts with the SecY protein in vivo. May bind preferentially to an uncomplexed state of SecY, thus functioning either as a chelating agent for excess SecY in the cell or as a regulatory factor that negatively controls the translocase function. In Aliivibrio fischeri (strain MJ11) (Vibrio fischeri), this protein is Protein Syd.